The chain runs to 218 residues: MAEISRIQYEMEYTEGISQRMRVPEKLKVAPPNADLEQGFQDGVPNASVIMQVPERIVVTGNNEDISFSRPADLDLIQSTPFKPLALKTPPRVLTLSERPLDFLDLERPPPTPQSEEIRAVGRLKRERSMSENAVRQNGQLVRNDSMYGISSLDAAVEGASEDMSVVDAASLRRQIIKLNRRLQLLEEENKERAKREMVMYSITVAFWLLNSWLWFRR.

The Cytoplasmic portion of the chain corresponds to M1–M198. Phosphothreonine is present on T89. A phosphoserine mark is found at S129, S131, S146, and S171. A coiled-coil region spans residues V167 to M198. The helical; Anchor for type IV membrane protein transmembrane segment at V199 to F216 threads the bilayer. Residues R217 to R218 lie on the Mitochondrial intermembrane side of the membrane.

The protein belongs to the Tango11 family. In terms of assembly, homodimer. Interacts with DNM1L. Interacts with C11orf65/MFI; the interaction inhibits MFF interaction with DNM1L.

The protein resides in the mitochondrion outer membrane. It is found in the peroxisome. The protein localises to the cytoplasmic vesicle. It localises to the secretory vesicle. Its subcellular location is the synaptic vesicle. In terms of biological role, plays a role in mitochondrial and peroxisomal fission. Promotes the recruitment and association of the fission mediator dynamin-related protein 1 (DNM1L) to the mitochondrial surface. May be involved in regulation of synaptic vesicle membrane dynamics by recruitment of DNM1L to clathrin-containing vesicles. This is Mitochondrial fission factor (Mff) from Rattus norvegicus (Rat).